Consider the following 131-residue polypeptide: Phosphoribosyl-AMP cyclohydrolase (131 aa).

Aspartate 78 provides a ligand contact to Mg(2+). Cysteine 79 is a binding site for Zn(2+). Residues aspartate 80 and aspartate 82 each coordinate Mg(2+). The Zn(2+) site is built by cysteine 96 and cysteine 103.

This sequence belongs to the PRA-CH family. As to quaternary structure, homodimer. It depends on Mg(2+) as a cofactor. Requires Zn(2+) as cofactor.

It localises to the cytoplasm. It carries out the reaction 1-(5-phospho-beta-D-ribosyl)-5'-AMP + H2O = 1-(5-phospho-beta-D-ribosyl)-5-[(5-phospho-beta-D-ribosylamino)methylideneamino]imidazole-4-carboxamide. It functions in the pathway amino-acid biosynthesis; L-histidine biosynthesis; L-histidine from 5-phospho-alpha-D-ribose 1-diphosphate: step 3/9. Catalyzes the hydrolysis of the adenine ring of phosphoribosyl-AMP. The polypeptide is Phosphoribosyl-AMP cyclohydrolase (Neisseria meningitidis serogroup C / serotype 2a (strain ATCC 700532 / DSM 15464 / FAM18)).